A 156-amino-acid chain; its full sequence is Ribosomal RNA large subunit methyltransferase H (156 aa).

Residues L72, G104, and 123 to 128 each bind S-adenosyl-L-methionine; that span reads LSKMTL.

This sequence belongs to the RNA methyltransferase RlmH family. As to quaternary structure, homodimer.

It is found in the cytoplasm. It catalyses the reaction pseudouridine(1915) in 23S rRNA + S-adenosyl-L-methionine = N(3)-methylpseudouridine(1915) in 23S rRNA + S-adenosyl-L-homocysteine + H(+). Functionally, specifically methylates the pseudouridine at position 1915 (m3Psi1915) in 23S rRNA. The chain is Ribosomal RNA large subunit methyltransferase H from Maridesulfovibrio salexigens (strain ATCC 14822 / DSM 2638 / NCIMB 8403 / VKM B-1763) (Desulfovibrio salexigens).